The following is a 169-amino-acid chain: SsrA-binding protein (169 aa).

This sequence belongs to the SmpB family.

It localises to the cytoplasm. Required for rescue of stalled ribosomes mediated by trans-translation. Binds to transfer-messenger RNA (tmRNA), required for stable association of tmRNA with ribosomes. tmRNA and SmpB together mimic tRNA shape, replacing the anticodon stem-loop with SmpB. tmRNA is encoded by the ssrA gene; the 2 termini fold to resemble tRNA(Ala) and it encodes a 'tag peptide', a short internal open reading frame. During trans-translation Ala-aminoacylated tmRNA acts like a tRNA, entering the A-site of stalled ribosomes, displacing the stalled mRNA. The ribosome then switches to translate the ORF on the tmRNA; the nascent peptide is terminated with the 'tag peptide' encoded by the tmRNA and targeted for degradation. The ribosome is freed to recommence translation, which seems to be the essential function of trans-translation. This chain is SsrA-binding protein, found in Mycolicibacterium paratuberculosis (strain ATCC BAA-968 / K-10) (Mycobacterium paratuberculosis).